The following is a 337-amino-acid chain: Probable E3 ubiquitin-protein ligase LUL1 (337 aa).

Gly-2 carries N-myristoyl glycine lipidation. Positions 139-255 are DAR2 domain; the sequence is FTFDASMPGR…GEIKIEVVKQ (117 aa). The RING-type; atypical zinc-finger motif lies at 285 to 324; the sequence is CVVCLSEPRDTTVLPCRHMCMCSGCAKALRFQTNLCPVCR.

It belongs to the RING-type zinc finger family. LOG2 subfamily. In terms of processing, myristoylated (in vitro).

It catalyses the reaction S-ubiquitinyl-[E2 ubiquitin-conjugating enzyme]-L-cysteine + [acceptor protein]-L-lysine = [E2 ubiquitin-conjugating enzyme]-L-cysteine + N(6)-ubiquitinyl-[acceptor protein]-L-lysine.. Its pathway is protein modification; protein ubiquitination. Its function is as follows. Acts as an E3 ubiquitin-protein ligase, or as part of E3 complex, which accepts ubiquitin from specific E2 ubiquitin-conjugating enzymes and then transfers it to substrates (in vitro). The protein is Probable E3 ubiquitin-protein ligase LUL1 (LUL1) of Arabidopsis thaliana (Mouse-ear cress).